Here is a 147-residue protein sequence, read N- to C-terminus: Nucleoside diphosphate kinase (147 aa).

Residues lysine 11, phenylalanine 59, arginine 87, threonine 93, arginine 104, and asparagine 114 each coordinate ATP. Histidine 117 acts as the Pros-phosphohistidine intermediate in catalysis.

Belongs to the NDK family. Mg(2+) serves as cofactor.

The protein resides in the cytoplasm. It catalyses the reaction a 2'-deoxyribonucleoside 5'-diphosphate + ATP = a 2'-deoxyribonucleoside 5'-triphosphate + ADP. It carries out the reaction a ribonucleoside 5'-diphosphate + ATP = a ribonucleoside 5'-triphosphate + ADP. Major role in the synthesis of nucleoside triphosphates other than ATP. The ATP gamma phosphate is transferred to the NDP beta phosphate via a ping-pong mechanism, using a phosphorylated active-site intermediate. In Sulfurisphaera tokodaii (strain DSM 16993 / JCM 10545 / NBRC 100140 / 7) (Sulfolobus tokodaii), this protein is Nucleoside diphosphate kinase.